The following is a 189-amino-acid chain: Large ribosomal subunit protein eL14 (189 aa).

Belongs to the eukaryotic ribosomal protein eL14 family.

Component of the large ribosomal subunit. The ribosome is a large ribonucleoprotein complex responsible for the synthesis of proteins in the cell. The chain is Large ribosomal subunit protein eL14 from Trypanosoma brucei brucei.